A 1415-amino-acid chain; its full sequence is Zygote defective protein 9 (1415 aa).

TOG regions lie at residues 1-250 (MSNW…AKNA) and 251-530 (PPVA…AGPA). A coiled-coil region spans residues 21–48 (DELRESKKWQERKEALEALLKVLTDNER). HEAT repeat units lie at residues 30 to 68 (QERKEALEALLKVLTDNERLSTKASYAELIGHLQMVLAK), 95 to 132 (SFAGPLLPVIFEKMKEKKPMLREPLVDCSNEVGRTMQS), 135 to 172 (TGQEDILAALAKPNPQIKQQTALFVARQLDLVVPAKQP), and 179 to 217 (VVPVFGKLTGDADQDVREASLQGLGAVQRIIGDKNVKNL). The segment at 243–278 (AEEQAKNAPPVAPTSSTPSASAASGDPSGGTATAVV) is disordered. Low complexity predominate over residues 255–276 (PTSSTPSASAASGDPSGGTATA). 4 HEAT repeats span residues 339–377 (ANYGALVERLQKVLEKDANINVAALAANCITGIANGLRT), 381–418 (PFAVSVTPIIFEKFKEKKPTLRDPLVACIDAVVATTNL), 420–457 (AVGEIVLAALGKPNPSIKTQTDLFLQRCFMKLNSQTMP), and 464–502 (LIPSLIKHSGDSDSEVREASYAAMGAMMRAIGEKPSLQL). The tract at residues 544 to 603 (APPAAAPPKKTAPPKKQPEDEEVVEEEDEPLKPPPGDKKKKVPVKENEENEPPVVAPKAE) is disordered. The segment covering 562 to 572 (EDEEVVEEEDE) has biased composition (acidic residues). The TOG 3 stretch occupies residues 602-867 (AELLLSDNED…VEERIKRTGV (266 aa)). HEAT repeat units follow at residues 706–743 (IKVLELCKVIVELIRDTETPMSQEEVSAFVPYLLLKTG), 764–801 (VGPLKMTPMLLDALKSKNARQRSECLLVIEYYITNAGI), and 804–841 (LKSLSVEKTVAPFVGDKDVNVRNAAINVLVACFKFEGD). The segment at 867 to 914 (VKPGSGVVTSPPTGGPKILVPQQQGSVVRRPASRSRTREPEPEEVQSD) is disordered.

It belongs to the TOG/XMAP215 family. In terms of assembly, interacts with tac-1 to form a heterodimer.

The protein resides in the cytoplasm. It is found in the cytoskeleton. It localises to the spindle pole. The protein localises to the microtubule organizing center. Its subcellular location is the centrosome. Its function is as follows. Plays a major role in organizing microtubules and spindle poles during mitosis and meiosis in one-cell stage embryos. Required for default nucleus positioning in oocytes. This chain is Zygote defective protein 9, found in Caenorhabditis elegans.